The following is a 45-amino-acid chain: Large ribosomal subunit protein bL34 (45 aa).

The segment at 1–45 is disordered; sequence MTKRTFGGTSRKRKRVSGFRVRMRTHTGRSVIRSRRKKGRSRIAV. Over residues 10–45 the composition is skewed to basic residues; the sequence is SRKRKRVSGFRVRMRTHTGRSVIRSRRKKGRSRIAV.

Belongs to the bacterial ribosomal protein bL34 family.

The chain is Large ribosomal subunit protein bL34 from Prochlorococcus marinus (strain SARG / CCMP1375 / SS120).